Reading from the N-terminus, the 108-residue chain is UPF0145 protein LACR_1006 (108 aa).

It belongs to the UPF0145 family.

This Lactococcus lactis subsp. cremoris (strain SK11) protein is UPF0145 protein LACR_1006.